We begin with the raw amino-acid sequence, 421 residues long: Replication factor C large subunit (421 aa).

63–70 (GPPGIGKT) contributes to the ATP binding site.

Belongs to the activator 1 small subunits family. RfcL subfamily. In terms of assembly, heteromultimer composed of small subunits (RfcS) and large subunits (RfcL).

Part of the RFC clamp loader complex which loads the PCNA sliding clamp onto DNA. The polypeptide is Replication factor C large subunit (Pyrobaculum calidifontis (strain DSM 21063 / JCM 11548 / VA1)).